A 105-amino-acid chain; its full sequence is Small ribosomal subunit protein uS10c (105 aa).

The protein belongs to the universal ribosomal protein uS10 family. Part of the 30S ribosomal subunit.

It is found in the plastid. The protein resides in the chloroplast. In terms of biological role, involved in the binding of tRNA to the ribosomes. The chain is Small ribosomal subunit protein uS10c from Gracilaria tenuistipitata var. liui (Red alga).